A 162-amino-acid polypeptide reads, in one-letter code: Ribosome-binding factor A (162 aa).

Residues valine 123–aspartate 162 are disordered. A compositionally biased stretch (low complexity) spans arginine 125–proline 136.

The protein belongs to the RbfA family. In terms of assembly, monomer. Binds 30S ribosomal subunits, but not 50S ribosomal subunits or 70S ribosomes.

The protein localises to the cytoplasm. Its function is as follows. One of several proteins that assist in the late maturation steps of the functional core of the 30S ribosomal subunit. Associates with free 30S ribosomal subunits (but not with 30S subunits that are part of 70S ribosomes or polysomes). Required for efficient processing of 16S rRNA. May interact with the 5'-terminal helix region of 16S rRNA. The polypeptide is Ribosome-binding factor A (Rhodococcus opacus (strain B4)).